The following is a 114-amino-acid chain: Immunomodulatory protein FIP-Fve (114 aa).

Ser1 bears the N-acetylserine mark.

Belongs to the fungal immunomodulatory protein (FIP) family. In terms of assembly, homodimer.

Lectin with specificity for complex cell-surface carbohydrates. Possesses immunomodulatory activity, stimulates lymphocyte mitogenesis, suppresses systemic anaphylaxis reactions and edema, enhances transcription of IL-2, IFN-gamma and TNF-alpha and hemagglutinates red blood cells. This is Immunomodulatory protein FIP-Fve from Flammulina velutipes (Agaricus velutipes).